Reading from the N-terminus, the 689-residue chain is Glycine--tRNA ligase beta subunit (689 aa).

It belongs to the class-II aminoacyl-tRNA synthetase family. In terms of assembly, tetramer of two alpha and two beta subunits.

The protein localises to the cytoplasm. It catalyses the reaction tRNA(Gly) + glycine + ATP = glycyl-tRNA(Gly) + AMP + diphosphate. This is Glycine--tRNA ligase beta subunit from Acinetobacter baylyi (strain ATCC 33305 / BD413 / ADP1).